A 558-amino-acid polypeptide reads, in one-letter code: Potassium-transporting ATPase potassium-binding subunit (558 aa).

12 consecutive transmembrane segments (helical) span residues 1 to 21 (MEII…SGYL), 66 to 86 (FNGF…WLFL), 127 to 147 (MIVM…VCIA), 166 to 186 (IVRF…ILLM), 245 to 265 (IWSN…MLFL), 281 to 301 (ALIL…LTMW), 327 to 347 (FGAG…TGSV), 354 to 374 (LTPI…VFGG), 377 to 397 (VGLM…SLMV), 416 to 436 (IVLV…LAFM), 482 to 502 (ISTG…QLMI), and 531 to 551 (IVFI…LGPI).

Belongs to the KdpA family. The system is composed of three essential subunits: KdpA, KdpB and KdpC.

The protein localises to the cell membrane. Its function is as follows. Part of the high-affinity ATP-driven potassium transport (or Kdp) system, which catalyzes the hydrolysis of ATP coupled with the electrogenic transport of potassium into the cytoplasm. This subunit binds the extracellular potassium ions and delivers the ions to the membrane domain of KdpB through an intramembrane tunnel. The polypeptide is Potassium-transporting ATPase potassium-binding subunit (Staphylococcus aureus (strain USA300)).